The primary structure comprises 286 residues: Ferric acinetobactin reductase (286 aa).

In terms of domain architecture, FAD-binding FR-type spans 25 to 131 (MEQLEMTIVS…IGPRPHFIPN (107 aa)). Residues Arg-79, Val-80, Thr-82, Asp-96, Val-98, His-100, Asp-102, Ser-104, Ala-106, Arg-250, Gly-252, and Ser-255 each contribute to the FAD site.

This sequence belongs to the SIP oxidoreductase family. As to quaternary structure, monomer in solution. FAD serves as cofactor.

It carries out the reaction 2 a Fe(II)-siderophore + NAD(+) + H(+) = 2 a Fe(III)-siderophore + NADH. The enzyme catalyses 2 a Fe(II)-siderophore + NADP(+) + H(+) = 2 a Fe(III)-siderophore + NADPH. Ferric-siderophore reductase involved in iron removal from the siderophores after their transport into the cell. Interacts with the siderophores acinetobactin (Acb) and preacinetobactin (pre-Acb) and catalyzes the reduction of the ferric iron bound to the siderophores to ferrous iron, resulting in destabilization of the siderophore chelation complex and entrance of ferrous iron into the intracellular pool of bioavailable metals. Can use NADH and NADPH as electron donors in vitro, but the reduction rate is very slow, suggesting that NADH and NADPH are not the physiological partners of BauF. The polypeptide is Ferric acinetobactin reductase (Acinetobacter baumannii).